The following is a 547-amino-acid chain: MAQQEAEIIRPLANFSPSLWGDQFIKNDSDAKVEDKISKTIEVLKEEVKSMLTATGTKMVDTMNLIDTLERLGVSYHFEHEIEEILQQFFNLNTDYNDEAYDLYTVATHFRLFRQHGHRITCADIFGRWRDENGKFHEGLKDDAKGLLSLYEASYLRTRGETILDEALDFTTASLKSIAPNLESPLRRQVEHALVQQLHWGNPRIEARNFISLYEEYEDKDESLLRFAKLDYNLLQMMHKEELHEVSRWWKELDLVAKLPYARDRVVECFFWAMGVYHEPQYSRARVMLTKTIAMTSIIDDTYDAYGTIEELDIFTEAIERWNVEEMKRLPEYIKPFYKALLELYEQFEEELAKEGRSYATHYAIESLKELVRSYHVEAKWFIQGYLPPFEEYLKNALITCTYCYHTTTSLLGVESAVREDFEWLSKKPKMLVAGLLICRVIDDIATYEVEKDRGQIATGIESYMRDNGATKEEAITKFFEIANDAWKDINEECMRPSPHSRDVLMRILNLERIIDVTYKGNEDGYTQPEKVLKPHIIALFVDPIQI.

Mg(2+)-binding residues include Asp-300, Asp-304, Asp-443, and Glu-451. The short motif at 300–304 (DDTYD) is the DDXXD motif element.

The protein belongs to the terpene synthase family. Tpsa subfamily. It depends on Mg(2+) as a cofactor. Mn(2+) serves as cofactor. As to expression, expressed in leaves.

The protein localises to the plastid. It is found in the chloroplast. The enzyme catalyses (2E,6E)-farnesyl diphosphate = germacrene A + diphosphate. It carries out the reaction (2E,6E)-farnesyl diphosphate = (1S,2S,4R)-beta-elemene + diphosphate. It participates in secondary metabolite biosynthesis; terpenoid biosynthesis. In terms of biological role, sesquiterpene synthase involved in the biosynthesis of volatile compounds widely used in aromatherapy and folk medicine, and present in culinary herbs. Mediates the conversion of (2E,6E)-farnesyl diphosphate (FPP) into germacrene A and beta-elemene. Not able to use (2E)-geranyl diphosphate (GPP) as substrate. In Lavandula pedunculata subsp. lusitanica (French lavender), this protein is Germacrene A synthase.